The chain runs to 329 residues: GMP reductase (329 aa).

The active-site Thioimidate intermediate is Cys178. Residue 207 to 230 (IIADGGIRNNGDIAKSIRFGATMC) participates in NADP(+) binding.

It belongs to the IMPDH/GMPR family. GuaC type 2 subfamily.

It carries out the reaction IMP + NH4(+) + NADP(+) = GMP + NADPH + 2 H(+). Its function is as follows. Catalyzes the irreversible NADPH-dependent deamination of GMP to IMP. It functions in the conversion of nucleobase, nucleoside and nucleotide derivatives of G to A nucleotides, and in maintaining the intracellular balance of A and G nucleotides. This chain is GMP reductase, found in Lacticaseibacillus casei (strain BL23) (Lactobacillus casei).